The primary structure comprises 248 residues: 14-3-3-like protein G-BOX factor 14 kappa (248 aa).

Phosphoserine is present on residues Ser-70, Ser-112, and Ser-193. Thr-214 is modified (phosphothreonine).

This sequence belongs to the 14-3-3 family. In terms of assembly, interacts with the isocitrate dehydrogenase IDH3, and malate dehydrogenases MDH1 and MDH2. Interacts with CINV1.

It localises to the nucleus. The protein localises to the cytoplasm. Is associated with a DNA binding complex that binds to the G box, a well-characterized cis-acting DNA regulatory element found in plant genes. Involved in the regulation of nutrient metabolism. Negative regulator of freezing tolerance that modulates cold-responsive C-repeat-binding factors (CBF) DREB1A AND DREB1B proteins stability by facilitating their ubiquitin-mediated degradation; this processus is counteracted by B1L. This is 14-3-3-like protein G-BOX factor 14 kappa from Arabidopsis thaliana (Mouse-ear cress).